The chain runs to 206 residues: Thiamine-phosphate synthase (206 aa).

4-amino-2-methyl-5-(diphosphooxymethyl)pyrimidine contacts are provided by residues 35-39 (QLRHK) and N67. 2 residues coordinate Mg(2+): D68 and D87. S106 serves as a coordination point for 4-amino-2-methyl-5-(diphosphooxymethyl)pyrimidine. 132 to 134 (TGS) is a 2-[(2R,5Z)-2-carboxy-4-methylthiazol-5(2H)-ylidene]ethyl phosphate binding site. K135 serves as a coordination point for 4-amino-2-methyl-5-(diphosphooxymethyl)pyrimidine. Residue G163 participates in 2-[(2R,5Z)-2-carboxy-4-methylthiazol-5(2H)-ylidene]ethyl phosphate binding.

It belongs to the thiamine-phosphate synthase family. The cofactor is Mg(2+).

It catalyses the reaction 2-[(2R,5Z)-2-carboxy-4-methylthiazol-5(2H)-ylidene]ethyl phosphate + 4-amino-2-methyl-5-(diphosphooxymethyl)pyrimidine + 2 H(+) = thiamine phosphate + CO2 + diphosphate. The catalysed reaction is 2-(2-carboxy-4-methylthiazol-5-yl)ethyl phosphate + 4-amino-2-methyl-5-(diphosphooxymethyl)pyrimidine + 2 H(+) = thiamine phosphate + CO2 + diphosphate. It carries out the reaction 4-methyl-5-(2-phosphooxyethyl)-thiazole + 4-amino-2-methyl-5-(diphosphooxymethyl)pyrimidine + H(+) = thiamine phosphate + diphosphate. It functions in the pathway cofactor biosynthesis; thiamine diphosphate biosynthesis; thiamine phosphate from 4-amino-2-methyl-5-diphosphomethylpyrimidine and 4-methyl-5-(2-phosphoethyl)-thiazole: step 1/1. Functionally, condenses 4-methyl-5-(beta-hydroxyethyl)thiazole monophosphate (THZ-P) and 2-methyl-4-amino-5-hydroxymethyl pyrimidine pyrophosphate (HMP-PP) to form thiamine monophosphate (TMP). This chain is Thiamine-phosphate synthase, found in Chlorobium phaeobacteroides (strain DSM 266 / SMG 266 / 2430).